We begin with the raw amino-acid sequence, 799 residues long: ATP-dependent DNA helicase Hel308 (799 aa).

Residues Gln-29 and 47–54 (IPTASGKT) each bind ATP. In terms of domain architecture, Helicase ATP-binding spans 34 to 200 (EAGVTEGENL…WLDAGLVDSD (167 aa)). The DEAH box motif lies at 145-148 (DEVH). In terms of domain architecture, Helicase C-terminal spans 234-435 (QTAAIVRDTL…EPALRTHILA (202 aa)). Disordered stretches follow at residues 522–566 (RGAS…DRDP) and 750–799 (NVLE…LGDF). Over residues 553-566 (LAEDADESDADRDP) the composition is skewed to acidic residues.

It belongs to the helicase family. Hel308 subfamily. In terms of assembly, monomer.

The enzyme catalyses Couples ATP hydrolysis with the unwinding of duplex DNA by translocating in the 3'-5' direction.. It catalyses the reaction ATP + H2O = ADP + phosphate + H(+). In terms of biological role, DNA-dependent ATPase and 3'-5' DNA helicase that may be involved in repair of stalled replication forks. The sequence is that of ATP-dependent DNA helicase Hel308 from Haloarcula marismortui (strain ATCC 43049 / DSM 3752 / JCM 8966 / VKM B-1809) (Halobacterium marismortui).